The primary structure comprises 364 residues: MANVVLRNVRKTYPGGFEAIKGVDLEVGDGQFCVLVGPSGCGKSTLLRMVAGLETITAGEIDIGGRVVNDVEPADRDIAMVFQNYALYPHMSVYNNMAYGLRNRGMAKPEIEARVQEAARILEIGAMLDRKPRQLSGGQRQRVAMGRAIVRQPKVFLFDEPLSNLDAKLRVAMRVEIRKLQRRLSTTAIYVTHDQLEAMTLADILVVMNAGQVEQIGSPLDVYAKPATTFVASFIGAPPMNLIPLDAEGVRARFGGAVTEAGVLGVRPEDLAISSEPPAPGGLTLDLAVEAIERVGPETFVYGTRSPGGDLAAISSKPGELPPDEIIIRIPGQEAPAIGQRISVVALRHNLHLFSADGRRRIAV.

One can recognise an ABC transporter domain in the interval 4-235; the sequence is VVLRNVRKTY…PATTFVASFI (232 aa). 37–44 is an ATP binding site; the sequence is GPSGCGKS.

The protein belongs to the ABC transporter superfamily. sn-glycerol-3-phosphate importer (TC 3.A.1.1.3) family. In terms of assembly, the complex is composed of two ATP-binding proteins (UgpC), two transmembrane proteins (UgpA and UgpE) and a solute-binding protein (UgpB).

Its subcellular location is the cell inner membrane. The enzyme catalyses sn-glycerol 3-phosphate(out) + ATP + H2O = sn-glycerol 3-phosphate(in) + ADP + phosphate + H(+). Its function is as follows. Part of the ABC transporter complex UgpBAEC involved in sn-glycerol-3-phosphate (G3P) import. Responsible for energy coupling to the transport system. This chain is sn-glycerol-3-phosphate import ATP-binding protein UgpC, found in Rhodopseudomonas palustris (strain BisB5).